Here is a 317-residue protein sequence, read N- to C-terminus: uncharacterized protein (317 aa).

The next 7 membrane-spanning stretches (helical) occupy residues 24-44, 63-83, 136-156, 187-207, 229-249, 252-272, and 295-315; these read ISIIVLTTVFIVNYIMSTGIM, LSISSTLACFFSPTVGYSILA, LGVALAKTIIGFLYLSIISED, LIPIMFFMMTLVLYLSKIGFF, ILALTEIMNVQAAIVMAGGFL, GILSSKEVLIGLIIGNVLTFS, and IVMVNAAITLLLDIFIIAGLL.

To M.jannaschii MJ0880, MJ1556 and MJ1589.

The protein localises to the cell membrane. This is an uncharacterized protein from Methanocaldococcus jannaschii (strain ATCC 43067 / DSM 2661 / JAL-1 / JCM 10045 / NBRC 100440) (Methanococcus jannaschii).